The sequence spans 330 residues: Ketol-acid reductoisomerase (NADP(+)) (330 aa).

Residues 2-181 (AKVYYDNDVN…GATRAGVIET (180 aa)) enclose the KARI N-terminal Rossmann domain. Residues 25–28 (YGSQ), R48, S52, and 82–85 (DEVQ) each bind NADP(+). The active site involves H107. G133 provides a ligand contact to NADP(+). Residues 182-327 (TFKEETETDL…ADLRMMMPFI (146 aa)) form the KARI C-terminal knotted domain. Mg(2+) contacts are provided by D190, E194, E226, and E230. Residue S251 coordinates substrate.

It belongs to the ketol-acid reductoisomerase family. It depends on Mg(2+) as a cofactor.

The catalysed reaction is (2R)-2,3-dihydroxy-3-methylbutanoate + NADP(+) = (2S)-2-acetolactate + NADPH + H(+). The enzyme catalyses (2R,3R)-2,3-dihydroxy-3-methylpentanoate + NADP(+) = (S)-2-ethyl-2-hydroxy-3-oxobutanoate + NADPH + H(+). It functions in the pathway amino-acid biosynthesis; L-isoleucine biosynthesis; L-isoleucine from 2-oxobutanoate: step 2/4. The protein operates within amino-acid biosynthesis; L-valine biosynthesis; L-valine from pyruvate: step 2/4. Its function is as follows. Involved in the biosynthesis of branched-chain amino acids (BCAA). Catalyzes an alkyl-migration followed by a ketol-acid reduction of (S)-2-acetolactate (S2AL) to yield (R)-2,3-dihydroxy-isovalerate. In the isomerase reaction, S2AL is rearranged via a Mg-dependent methyl migration to produce 3-hydroxy-3-methyl-2-ketobutyrate (HMKB). In the reductase reaction, this 2-ketoacid undergoes a metal-dependent reduction by NADPH to yield (R)-2,3-dihydroxy-isovalerate. This is Ketol-acid reductoisomerase (NADP(+)) from Macrococcus caseolyticus (strain JCSC5402) (Macrococcoides caseolyticum).